Consider the following 284-residue polypeptide: Tropomyosin (284 aa).

Residues 1–284 (MDAIKKKMQA…DMTFTELIGN (284 aa)) adopt a coiled-coil conformation.

It belongs to the tropomyosin family. Homodimer.

Tropomyosin, in association with the troponin complex, plays a central role in the calcium dependent regulation of muscle contraction. In Periplaneta fuliginosa (Smokybrown cockroach), this protein is Tropomyosin.